The chain runs to 128 residues: MAKLTKDELIEAFKEMTLIELSEFVKEFEEVFDVTAAAPVAAVAAAPGAEGGAAAEEKDEFDVVLEDAGAKKIGVIKVVREIVSGLGLKEAKELVEGAPKAILEGASKDDAEAAKTKLEEAGAKVSLK.

It belongs to the bacterial ribosomal protein bL12 family. In terms of assembly, homodimer. Part of the ribosomal stalk of the 50S ribosomal subunit. Forms a multimeric L10(L12)X complex, where L10 forms an elongated spine to which 2 to 4 L12 dimers bind in a sequential fashion. Binds GTP-bound translation factors.

Its function is as follows. Forms part of the ribosomal stalk which helps the ribosome interact with GTP-bound translation factors. Is thus essential for accurate translation. This chain is Large ribosomal subunit protein bL12, found in Corynebacterium jeikeium (strain K411).